We begin with the raw amino-acid sequence, 150 residues long: Large ribosomal subunit protein bL9 (150 aa).

The protein belongs to the bacterial ribosomal protein bL9 family.

Binds to the 23S rRNA. This is Large ribosomal subunit protein bL9 from Ralstonia pickettii (strain 12J).